The chain runs to 131 residues: Heterochromatin silencing protein rss1 (131 aa).

In terms of assembly, monomer.

The protein localises to the cytoplasm. Its subcellular location is the nucleus. In terms of biological role, required for heterochromatin silencing within pericentromeric repeats and at telomers. Facilitates the recruitment of Clr6 histone deacetylase (HDAC) by interacting with histones. Also interacts with Rad25, which mediates heterochromatin silencing in DNA repeats by recruiting the RITS complex. Together with Rad25, forms a regulatory hub that defines heterochromatin silencing within tandem repeats via linking RNAi and HDAC. The polypeptide is Heterochromatin silencing protein rss1 (rss1) (Schizosaccharomyces pombe (strain 972 / ATCC 24843) (Fission yeast)).